The primary structure comprises 168 residues: Shikimate kinase (168 aa).

An ATP-binding site is contributed by 12–17; that stretch reads GAGKST. Position 16 (S16) interacts with Mg(2+). 3 residues coordinate substrate: D34, R58, and G80. R117 contacts ATP. R136 lines the substrate pocket. R153 is a binding site for ATP.

The protein belongs to the shikimate kinase family. As to quaternary structure, monomer. It depends on Mg(2+) as a cofactor.

The protein localises to the cytoplasm. It catalyses the reaction shikimate + ATP = 3-phosphoshikimate + ADP + H(+). The protein operates within metabolic intermediate biosynthesis; chorismate biosynthesis; chorismate from D-erythrose 4-phosphate and phosphoenolpyruvate: step 5/7. Its function is as follows. Catalyzes the specific phosphorylation of the 3-hydroxyl group of shikimic acid using ATP as a cosubstrate. This chain is Shikimate kinase, found in Rhodococcus jostii (strain RHA1).